The chain runs to 528 residues: Neuronal acetylcholine receptor subunit alpha-2 (528 aa).

The signal sequence occupies residues 1-23; it reads MGWPCRSIIPLLVWCFVTLQAAT. At 24–239 the chain is on the extracellular side; that stretch reads REQKQPHGFA…ITFYFVIRRL (216 aa). Asn-54 and Asn-104 each carry an N-linked (GlcNAc...) asparagine glycan. Disulfide bonds link Cys-158-Cys-172 and Cys-222-Cys-223. 3 consecutive transmembrane segments (helical) span residues 240–264, 272–290, and 306–327; these read PLFY…VFYL, ITLC…LLIT, and YLLF…VLNV. At 328–501 the chain is on the cytoplasmic side; sequence HHRSPSTHTM…WKYVAMVIDR (174 aa). Over residues 390-410 the composition is skewed to acidic residues; that stretch reads DDKWEEEEEEEEEEEEEEEEE. Positions 390-427 are disordered; it reads DDKWEEEEEEEEEEEEEEEEEKAYPSRVPSGGSQGTQC. Residues 502 to 520 form a helical membrane-spanning segment; the sequence is IFLWMFIIVCLLGTVGLFL.

Belongs to the ligand-gated ion channel (TC 1.A.9) family. Acetylcholine receptor (TC 1.A.9.1) subfamily. Alpha-2/CHRNA2 sub-subfamily. In terms of assembly, neuronal AChR is composed of two different types of subunits: alpha and non-alpha (beta). CHRNA2/alpha-2 subunit can be combined to CHRNB2/beta-2 or CHRNB4/beta-4 to give rise to functional receptors. Both CHRNA2:CHRNB2 and CHRNA2:CHRNB4 nAChR complexes are heteropentamers with two subtypes: LS (low agonist sensitivity) with a (CHRNA2)3:(CHRNB2/4)2 and HS (high agonist sensitivity) with a (CHRNA2)2:(CHRNB2/4)3 stoichiometries; the subtypes differ in their subunit binding interfaces which are involved in ligand binding.

The protein resides in the synaptic cell membrane. It localises to the cell membrane. It carries out the reaction Ca(2+)(in) = Ca(2+)(out). It catalyses the reaction K(+)(in) = K(+)(out). The catalysed reaction is Na(+)(in) = Na(+)(out). Component of neuronal acetylcholine receptors (nAChRs) that function as pentameric, ligand-gated cation channels with high calcium permeability among other activities. nAChRs are excitatory neurotrasnmitter receptors formed by a collection of nAChR subunits known to mediate synaptic transmission in the nervous system and the neuromuscular junction. Each nAchR subunit confers differential attributes to channel properties, including activation, deactivation and desensitization kinetics, pH sensitivity, cation permeability, and binding to allosteric modulators. CHRNA2 forms heteropentameric neuronal acetylcholine receptors with CHRNB2 and CHRNB4 and plays a role in nicotine dependence. The protein is Neuronal acetylcholine receptor subunit alpha-2 (CHRNA2) of Gallus gallus (Chicken).